Here is a 1142-residue protein sequence, read N- to C-terminus: Ribonucleoside-diphosphate reductase large subunit (1142 aa).

A disordered region spans residues 1–33 (MANRPAASALAGARSPSERQEPREPEVAPPGGD). Over residues 16-26 (PSERQEPREPE) the composition is skewed to basic and acidic residues. The RIP homotypic interaction motif (RHIM) signature appears at 55-75 (AYRISDSSFVQCGSNCSMIID). The tract at residues 118-322 (SGPSATTSVG…TDPGYPVPLE (205 aa)) is disordered. The span at 119–132 (GPSATTSVGTQTSG) shows a compositional bias: polar residues. Pro residues predominate over residues 141–159 (TPEPQGPQAVPPPPPPPFP). Positions 164–179 (CCARRDARGGAEKDVG) are enriched in basic and acidic residues. Positions 192–205 (SETEDSDSSDEDTG) are enriched in acidic residues. Low complexity predominate over residues 277-303 (GSATDPRASADSDSAAHAAAPQADVAP). The interval 294-400 (AAAPQADVAP…CLDLPPVPPN (107 aa)) is alpha-crystallin domain. Substrate-binding positions include Thr-571, 586 to 587 (SC), Gly-617, 796 to 800 (NLCTE), and 973 to 977 (PTAAS). A disulfide bridge connects residues Cys-587 and Cys-813. Catalysis depends on Asn-796, which acts as the Proton acceptor. Residue Cys-798 is the Cysteine radical intermediate of the active site. Glu-800 serves as the catalytic Proton acceptor.

It belongs to the ribonucleoside diphosphate reductase large chain family. Heterotetramer composed of a homodimer of the large subunit (R1) and a homodimer of the small subunit (R2). Larger multisubunit protein complex are also active, composed of (R1)n(R2)n. May self-assemble (via RIP homotypic interaction motif/RHIM) into homomeric fibrillar amyloid structures. Interacts (via RHIM) with human RIPK1 (via RHIM). Interacts (via RHIM) with human RIPK3 (via RHIM). May interact (via RHIM) with human ZBP1 (via RHIM). Interacts (via C-terminus) with host CASP8.

It is found in the host cell membrane. Its subcellular location is the host endosome membrane. The catalysed reaction is a 2'-deoxyribonucleoside 5'-diphosphate + [thioredoxin]-disulfide + H2O = a ribonucleoside 5'-diphosphate + [thioredoxin]-dithiol. In terms of biological role, ribonucleoside-diphosphate reductase holoenzyme that provides the precursors necessary for viral DNA synthesis. Allows virus growth in non-dividing cells, as well as reactivation from latency in infected hosts. Catalyzes the biosynthesis of deoxyribonucleotides from the corresponding ribonucleotides. The N-terminal region confers antiapoptotic activity in differentiated cells such as neurons and is important for viral reactivation to increase neural survivability. Prevents host necroptosis by targeting host RIPK1 and RIPK3, thereby hampering the formation of necroptotic RIPK1-RIPK3 complexes. May form hetero-amyloid structures with host proteins RIPK3 or ZBP1, thereby preventing RIPK3- and ZBP1-mediated necroptosis. In addition, inhibits extrinsic apoptosis by targeting host CASP8. The sequence is that of Ribonucleoside-diphosphate reductase large subunit from Homo sapiens (Human).